Here is a 651-residue protein sequence, read N- to C-terminus: Chaperone protein dnaK1 (651 aa).

Thr-197 carries the post-translational modification Phosphothreonine; by autocatalysis.

This sequence belongs to the heat shock protein 70 family.

Functionally, acts as a chaperone. The protein is Chaperone protein dnaK1 (dnaK1) of Thermosynechococcus vestitus (strain NIES-2133 / IAM M-273 / BP-1).